Reading from the N-terminus, the 468-residue chain is Adenosylhomocysteinase (468 aa).

Residues T57, D132, and E194 each coordinate substrate. Residue 195 to 197 (TTT) participates in NAD(+) binding. K224 and D228 together coordinate substrate. NAD(+) contacts are provided by residues N229, 258–263 (GFGDVG), E281, N316, 337–339 (IGH), and N382.

It belongs to the adenosylhomocysteinase family. Requires NAD(+) as cofactor.

It is found in the cytoplasm. It carries out the reaction S-adenosyl-L-homocysteine + H2O = L-homocysteine + adenosine. It functions in the pathway amino-acid biosynthesis; L-homocysteine biosynthesis; L-homocysteine from S-adenosyl-L-homocysteine: step 1/1. May play a key role in the regulation of the intracellular concentration of adenosylhomocysteine. The protein is Adenosylhomocysteinase of Methylobacterium sp. (strain 4-46).